Here is a 140-residue protein sequence, read N- to C-terminus: Ribosome-binding factor A (140 aa).

Positions 1–13 are enriched in basic residues; it reads MQKKSSSKSHRAT. The interval 1–22 is disordered; sequence MQKKSSSKSHRATRGPSQRQLR.

Belongs to the RbfA family. As to quaternary structure, monomer. Binds 30S ribosomal subunits, but not 50S ribosomal subunits or 70S ribosomes.

It localises to the cytoplasm. One of several proteins that assist in the late maturation steps of the functional core of the 30S ribosomal subunit. Associates with free 30S ribosomal subunits (but not with 30S subunits that are part of 70S ribosomes or polysomes). Required for efficient processing of 16S rRNA. May interact with the 5'-terminal helix region of 16S rRNA. The protein is Ribosome-binding factor A of Parvibaculum lavamentivorans (strain DS-1 / DSM 13023 / NCIMB 13966).